A 356-amino-acid polypeptide reads, in one-letter code: DNA polymerase IV (356 aa).

The UmuC domain occupies 6–186 (IVHIDMDAFY…LPVDAFHGIG (181 aa)). Mg(2+) is bound by residues D10 and D104. E105 is a catalytic residue.

It belongs to the DNA polymerase type-Y family. Monomer. It depends on Mg(2+) as a cofactor.

Its subcellular location is the cytoplasm. It catalyses the reaction DNA(n) + a 2'-deoxyribonucleoside 5'-triphosphate = DNA(n+1) + diphosphate. Poorly processive, error-prone DNA polymerase involved in untargeted mutagenesis. Copies undamaged DNA at stalled replication forks, which arise in vivo from mismatched or misaligned primer ends. These misaligned primers can be extended by PolIV. Exhibits no 3'-5' exonuclease (proofreading) activity. May be involved in translesional synthesis, in conjunction with the beta clamp from PolIII. The sequence is that of DNA polymerase IV from Gluconobacter oxydans (strain 621H) (Gluconobacter suboxydans).